The chain runs to 235 residues: Large ribosomal subunit protein uL3 (235 aa).

Gln151 is subject to N5-methylglutamine.

Belongs to the universal ribosomal protein uL3 family. In terms of assembly, part of the 50S ribosomal subunit. Forms a cluster with proteins L14 and L19. Methylated by PrmB.

Functionally, one of the primary rRNA binding proteins, it binds directly near the 3'-end of the 23S rRNA, where it nucleates assembly of the 50S subunit. This Rhodospirillum rubrum (strain ATCC 11170 / ATH 1.1.1 / DSM 467 / LMG 4362 / NCIMB 8255 / S1) protein is Large ribosomal subunit protein uL3.